Here is a 401-residue protein sequence, read N- to C-terminus: Argininosuccinate synthase (401 aa).

8–16 is a binding site for ATP; sequence AYSGGLDTS. L-citrulline is bound at residue tyrosine 85. Position 115 (glycine 115) interacts with ATP. Threonine 117, asparagine 121, and aspartate 122 together coordinate L-aspartate. Asparagine 121 provides a ligand contact to L-citrulline. Arginine 125, serine 173, glutamate 258, and tyrosine 270 together coordinate L-citrulline.

This sequence belongs to the argininosuccinate synthase family. Type 1 subfamily. As to quaternary structure, homotetramer.

Its subcellular location is the cytoplasm. It catalyses the reaction L-citrulline + L-aspartate + ATP = 2-(N(omega)-L-arginino)succinate + AMP + diphosphate + H(+). It functions in the pathway amino-acid biosynthesis; L-arginine biosynthesis; L-arginine from L-ornithine and carbamoyl phosphate: step 2/3. The sequence is that of Argininosuccinate synthase from Staphylococcus aureus (strain MRSA252).